Here is a 542-residue protein sequence, read N- to C-terminus: MDLGAITKYSALHAKPNGLILQYGTAGFRTKAEHLDHVMFRMGLLAVLRSKQTKSTIGVMVTASHNPEEDNGVKLVDPLGEMLAPSWEEHATCLANAEEQDMQRVLIDISEKEAVNLQQDAFVVIGRDTRPSSEKLSQSVIDGVTVLGGQFHDYGLLTTPQLHYMVYCRNTGGRYGKATIEGYYQKLSKAFVELTKQASCSGDEYRSLKVDCANGIGALKLREMEHYFSQGLSVQLFNDGSKGKLNHLCGADFVKSHQKPPQGMEIKSNERCCSFDGDADRIVYYYHDADGHFHLIDGDKIATLISSFLKELLVEIGESLNIGVVQTAYANGSSTRYLEEVMKVPVYCTKTGVKHLHHKAQEFDIGVYFEANGHGTALFSTAVEMKIKQSAEQLEDKKRKAAKMLENIIDLFNQAAGDAISDMLVIEAILALKGLTVQQWDALYTDLPNRQLKVQVADRRVISTTDAERQAVTPPGLQEAINDLVKKYKLSRAFVRPSGTEDVVRVYAEADSQESADHLAHEVSLAVFQLAGGIGERPQPGF.

Met-1 carries the post-translational modification N-acetylmethionine. A Phosphothreonine modification is found at Thr-62. The active-site Phosphoserine intermediate is the Ser-64. Positions 64, 276, 278, and 280 each coordinate Mg(2+). Ser-64 is modified (phosphoserine). Residues 370–372, 496–500, and Arg-505 each bind substrate; these read EAN and RPSGT.

The protein belongs to the phosphohexose mutase family. Requires Mg(2+) as cofactor. As to expression, found in many tissues except lung. Relatively high expression in pancreas, heart, liver, and placenta, and relatively low expression in brain, skeletal muscle and kidney.

The enzyme catalyses N-acetyl-alpha-D-glucosamine 1-phosphate = N-acetyl-D-glucosamine 6-phosphate. It functions in the pathway nucleotide-sugar biosynthesis; UDP-N-acetyl-alpha-D-glucosamine biosynthesis; N-acetyl-alpha-D-glucosamine 1-phosphate from alpha-D-glucosamine 6-phosphate (route I): step 2/2. Functionally, catalyzes the conversion of GlcNAc-6-P into GlcNAc-1-P during the synthesis of uridine diphosphate/UDP-GlcNAc, a sugar nucleotide critical to multiple glycosylation pathways including protein N- and O-glycosylation. This is Phosphoacetylglucosamine mutase from Homo sapiens (Human).